The sequence spans 253 residues: Ubiquinone biosynthesis O-methyltransferase (253 aa).

Positions 41, 72, 93, and 136 each coordinate S-adenosyl-L-methionine.

This sequence belongs to the methyltransferase superfamily. UbiG/COQ3 family.

It catalyses the reaction a 3-demethylubiquinol + S-adenosyl-L-methionine = a ubiquinol + S-adenosyl-L-homocysteine + H(+). The enzyme catalyses a 3-(all-trans-polyprenyl)benzene-1,2-diol + S-adenosyl-L-methionine = a 2-methoxy-6-(all-trans-polyprenyl)phenol + S-adenosyl-L-homocysteine + H(+). It participates in cofactor biosynthesis; ubiquinone biosynthesis. In terms of biological role, O-methyltransferase that catalyzes the 2 O-methylation steps in the ubiquinone biosynthetic pathway. The sequence is that of Ubiquinone biosynthesis O-methyltransferase from Chelativorans sp. (strain BNC1).